We begin with the raw amino-acid sequence, 570 residues long: Urease subunit alpha 1 (570 aa).

Positions G131–F570 constitute a Urease domain. Ni(2+)-binding residues include H136, H138, and K219. K219 is subject to N6-carboxylysine. H221 is a substrate binding site. The Ni(2+) site is built by H248 and H274. H322 (proton donor) is an active-site residue. Residue D362 participates in Ni(2+) binding.

This sequence belongs to the metallo-dependent hydrolases superfamily. Urease alpha subunit family. In terms of assembly, heterotrimer of UreA (gamma), UreB (beta) and UreC (alpha) subunits. Three heterotrimers associate to form the active enzyme. Ni cation serves as cofactor. In terms of processing, carboxylation allows a single lysine to coordinate two nickel ions.

The protein localises to the cytoplasm. It catalyses the reaction urea + 2 H2O + H(+) = hydrogencarbonate + 2 NH4(+). The protein operates within nitrogen metabolism; urea degradation; CO(2) and NH(3) from urea (urease route): step 1/1. Its function is as follows. May protect brucellae during their passage through the stomach. The major route of infection in human brucellosis is oral. The sequence is that of Urease subunit alpha 1 from Brucella abortus (strain 2308).